The primary structure comprises 478 residues: Proline--tRNA ligase (478 aa).

It belongs to the class-II aminoacyl-tRNA synthetase family. ProS type 3 subfamily. As to quaternary structure, homodimer.

The protein resides in the cytoplasm. It catalyses the reaction tRNA(Pro) + L-proline + ATP = L-prolyl-tRNA(Pro) + AMP + diphosphate. In terms of biological role, catalyzes the attachment of proline to tRNA(Pro) in a two-step reaction: proline is first activated by ATP to form Pro-AMP and then transferred to the acceptor end of tRNA(Pro). This is Proline--tRNA ligase from Methanococcoides burtonii (strain DSM 6242 / NBRC 107633 / OCM 468 / ACE-M).